The chain runs to 269 residues: 15-hydroxyprostaglandin dehydrogenase [NAD(+)] (269 aa).

Residues 12 to 20 (GAAQGIGKA), 36 to 37 (DW), 63 to 65 (CDV), and N91 each bind NAD(+). Residues S138 and Q148 each contribute to the substrate site. Residue Y151 is the Proton acceptor of the active site. Residues 151-155 (YCASK) and 186-188 (VDT) contribute to the NAD(+) site.

This sequence belongs to the short-chain dehydrogenases/reductases (SDR) family. Homodimer. As to expression, expressed in proximal convoluted tubules of the kidney, where it colocalizes with the prostaglandin transporter SLC22A22 (at protein level). Expressed in lung, intestine, stomach and liver.

Its subcellular location is the cytoplasm. It carries out the reaction prostaglandin E2 + NAD(+) = 15-oxoprostaglandin E2 + NADH + H(+). It catalyses the reaction (15S)-hydroxy-(5Z,8Z,11Z,13E)-eicosatetraenoate + NAD(+) = 15-oxo-(5Z,8Z,11Z,13E)-eicosatetraenoate + NADH + H(+). The catalysed reaction is (11R)-hydroxy-(5Z,8Z,12E,14Z)-eicosatetraenoate + NAD(+) = 11-oxo-(5Z,8Z,12E,14Z)-eicosatetraenoate + NADH + H(+). The enzyme catalyses lipoxin A4 + NAD(+) = 15-oxo-(5S,6R)-dihydroxy-(7E,9E,11Z,13E)-eicosatetraenoate + NADH + H(+). It carries out the reaction 15-oxo-(5S,6R)-dihydroxy-(7E,9E,11Z)-eicosatrienoate + NADH + H(+) = (5S,6R,15S)-trihydroxy-(7E,9E,11Z)-eicosatrienoate + NAD(+). It catalyses the reaction prostaglandin A1 + NAD(+) = 15-oxo-prostaglandin A1 + NADH + H(+). The catalysed reaction is prostaglandin E1 + NAD(+) = 15-oxoprostaglandin E1 + NADH + H(+). The enzyme catalyses 14-hydroxy-(4Z,7Z,10Z,12E,16Z,19Z)-docosahexaenoate + NAD(+) = 14-oxo-(4Z,7Z,10Z,12E,16Z,19Z)-docosahexaenoate + NADH + H(+). It carries out the reaction resolvin E1 + NAD(+) = 18-oxo-resolvin E1 + NADH + H(+). It catalyses the reaction resolvin D1 + NAD(+) = 8-oxoresolvin D1 + NADH + H(+). The catalysed reaction is resolvin D1 + NAD(+) = 17-oxoresolvin D1 + NADH + H(+). The enzyme catalyses resolvin D2 + NAD(+) = 7-oxoresolvin D2 + NADH + H(+). It carries out the reaction resolvin D2 + NAD(+) = 16-oxoresolvin D2 + NADH + H(+). In terms of biological role, catalyzes the NAD-dependent dehydrogenation (oxidation) of a broad array of hydroxylated polyunsaturated fatty acids (mainly eicosanoids and docosanoids, including prostaglandins, lipoxins and resolvins), yielding their corresponding keto (oxo) metabolites. Decreases the levels of the pro-proliferative prostaglandins such as prostaglandin E2 (whose activity is increased in cancer because of an increase in the expression of cyclooxygenase 2) and generates oxo-fatty acid products that can profoundly influence cell function by abrogating pro-inflammatory cytokine expression. Converts resolvins E1, D1 and D2 to their oxo products, which represents a mode of resolvin inactivation. Resolvin E1 plays important roles during the resolution phase of acute inflammation, while resolvins D1 and D2 have a unique role in obesity-induced adipose inflammation. This is 15-hydroxyprostaglandin dehydrogenase [NAD(+)] (Hpgd) from Mus musculus (Mouse).